Consider the following 664-residue polypeptide: L-glutamate oxidase precursor (664 aa).

Positions 1–44 form a signal peptide, tat-type signal; the sequence is MTEDHAVVRSDGGLSRRSFAAVAGTATVATALTSGVAAALPAPA. FAD-binding residues include Ala-105, Glu-124, Ala-125, Arg-133, Met-161, Arg-162, Asp-638, Trp-646, and Ile-647.

This sequence belongs to the flavin monoamine oxidase family. LGOX subfamily. As to quaternary structure, the mature enzyme is a heterohexamer composed of 2 alpha chains, 2 beta chains and 2 gamma chains (alpha2beta2gamma2). FAD is required as a cofactor. Post-translationally, predicted to be exported by the Tat system. The position of the signal peptide cleavage has not been experimentally proven. In terms of processing, the precursor form is proteolytically cleaved by an endopeptidase into alpha, beta and gamma chains, which form the stable mature enzyme.

Its subcellular location is the secreted. It carries out the reaction L-glutamate + O2 + H2O = H2O2 + 2-oxoglutarate + NH4(+). With respect to regulation, activity is stimulated in the presence of Mn(2+), Ca(2+) or Mg(2+). Its function is as follows. Catalyzes the oxidative deamination of L-glutamate to 2-ketoglutarate along with the production of ammonia and hydrogen peroxide. The chain is L-glutamate oxidase precursor from Streptomyces viridosporus (strain ATCC 14672 / DSM 40746 / JCM 4963 / KCTC 9882 / NRRL B-12104 / FH 1290) (Streptomyces ghanaensis).